Consider the following 295-residue polypeptide: Threonine/homoserine exporter RhtA (295 aa).

The Cytoplasmic portion of the chain corresponds to 1–9 (MPGSLRKMP). Residues 10 to 30 (VWLPIVILLVAMASIQGGASL) form a helical membrane-spanning segment. Positions 30 to 135 (LAKSLFPLVG…VLAVLGLWFL (106 aa)) constitute an EamA 1 domain. The Periplasmic segment spans residues 31 to 38 (AKSLFPLV). A helical transmembrane segment spans residues 39–59 (GAPGVTALRLALGTLILIAFF). Residues 60-71 (KPWRLRFAKEQR) are Cytoplasmic-facing. Residues 72 to 92 (LPLLFYGVSLGGMNYLFYLSI) form a helical membrane-spanning segment. A topological domain (periplasmic) is located at residue Gln93. Residues 94–114 (TVPLGIAVALEFTGPLAVALF) form a helical membrane-spanning segment. The Cytoplasmic portion of the chain corresponds to 115-118 (SSRR). A helical membrane pass occupies residues 119–139 (PVDFVWVVLAVLGLWFLLPLG). At 140–146 (QDVSHVD) the chain is on the periplasmic side. Residues 147–167 (LTGCALALGAGACWAIYILSG) traverse the membrane as a helical segment. An EamA 2 domain is found at 159–278 (CWAIYILSGQ…LGAIIAASMG (120 aa)). Residues 168-175 (QRAGAEHG) are Cytoplasmic-facing. The helical transmembrane segment at 176 to 196 (PATVAIGSLIAALIFVPIGAL) threads the bilayer. At 197–200 (QAGE) the chain is on the periplasmic side. A helical membrane pass occupies residues 201-221 (ALWHWSVIPLGLAVAILSTAL). The Cytoplasmic segment spans residues 222-237 (PYSLEMIALTRLPTRT). Residues 238–258 (FGTLMSMEPALAAVSGMIFLG) form a helical membrane-spanning segment. Residues 259-262 (ETLT) are Periplasmic-facing. A helical transmembrane segment spans residues 263-283 (PIQLLALGAIIAASMGSTLTV). The Cytoplasmic segment spans residues 284–295 (RKESKIKELDIN).

It belongs to the drug/metabolite transporter (DMT) superfamily. 10 TMS drug/metabolite exporter (DME) (TC 2.A.7.3) family.

It localises to the cell inner membrane. Involved in the efflux of threonine and homoserine. The sequence is that of Threonine/homoserine exporter RhtA (rhtA) from Escherichia coli O157:H7.